We begin with the raw amino-acid sequence, 244 residues long: Mediator of RNA polymerase II transcription subunit 19 (244 aa).

Disordered stretches follow at residues 1 to 56 (MENF…PGAD) and 171 to 244 (PKKK…SSLR). A compositionally biased stretch (pro residues) spans 26–47 (GKPPPPPPPPAGGGPGTAPPPT). A compositionally biased stretch (basic residues) spans 171 to 182 (PKKKNKHKHKQS). Ser-194 carries the post-translational modification Phosphoserine. Positions 212–224 (KRKKKEKKKKKNR) are enriched in basic residues. Ser-226 bears the Phosphoserine mark. The span at 234 to 244 (SSQASSSSSLR) shows a compositional bias: low complexity.

It belongs to the Mediator complex subunit 19 family. As to quaternary structure, component of the Mediator complex, which is composed of MED1, MED4, MED6, MED7, MED8, MED9, MED10, MED11, MED12, MED13, MED13L, MED14, MED15, MED16, MED17, MED18, MED19, MED20, MED21, MED22, MED23, MED24, MED25, MED26, MED27, MED29, MED30, MED31, CCNC, CDK8 and CDC2L6/CDK11. The MED12, MED13, CCNC and CDK8 subunits form a distinct module termed the CDK8 module. Mediator containing the CDK8 module is less active than Mediator lacking this module in supporting transcriptional activation. Individual preparations of the Mediator complex lacking one or more distinct subunits have been variously termed ARC, CRSP, DRIP, PC2, SMCC and TRAP.

It is found in the nucleus. Functionally, component of the Mediator complex, a coactivator involved in the regulated transcription of nearly all RNA polymerase II-dependent genes. Mediator functions as a bridge to convey information from gene-specific regulatory proteins to the basal RNA polymerase II transcription machinery. Mediator is recruited to promoters by direct interactions with regulatory proteins and serves as a scaffold for the assembly of a functional preinitiation complex with RNA polymerase II and the general transcription factors. The sequence is that of Mediator of RNA polymerase II transcription subunit 19 (MED19) from Homo sapiens (Human).